Consider the following 216-residue polypeptide: Probable chemoreceptor glutamine deamidase CheD (216 aa).

The protein belongs to the CheD family.

The enzyme catalyses L-glutaminyl-[protein] + H2O = L-glutamyl-[protein] + NH4(+). Functionally, probably deamidates glutamine residues to glutamate on methyl-accepting chemotaxis receptors (MCPs), playing an important role in chemotaxis. The chain is Probable chemoreceptor glutamine deamidase CheD from Halorhodospira halophila (strain DSM 244 / SL1) (Ectothiorhodospira halophila (strain DSM 244 / SL1)).